The chain runs to 127 residues: Fumarate reductase subunit C (127 aa).

The next 3 helical transmembrane spans lie at 30-50 (ATIL…GSLV), 67-87 (IVVA…QTFF), and 107-127 (VVVL…LVIV).

The protein belongs to the FrdC family. In terms of assembly, part of an enzyme complex containing four subunits: a flavoprotein (FrdA), an iron-sulfur protein (FrdB), and two hydrophobic anchor proteins (FrdC and FrdD).

The protein resides in the cell inner membrane. In terms of biological role, anchors the catalytic components of the fumarate reductase complex to the cell membrane, binds quinones. In Aliivibrio salmonicida (strain LFI1238) (Vibrio salmonicida (strain LFI1238)), this protein is Fumarate reductase subunit C.